A 364-amino-acid chain; its full sequence is tRNA 2-selenouridine synthase (364 aa).

One can recognise a Rhodanese domain in the interval 14–137 (LLADTPLIDV…LRQTAIQATW (124 aa)). Residue cysteine 97 is the S-selanylcysteine intermediate of the active site.

Belongs to the SelU family. As to quaternary structure, monomer.

The enzyme catalyses 5-methylaminomethyl-2-thiouridine(34) in tRNA + selenophosphate + (2E)-geranyl diphosphate + H2O + H(+) = 5-methylaminomethyl-2-selenouridine(34) in tRNA + (2E)-thiogeraniol + phosphate + diphosphate. It catalyses the reaction 5-methylaminomethyl-2-thiouridine(34) in tRNA + (2E)-geranyl diphosphate = 5-methylaminomethyl-S-(2E)-geranyl-thiouridine(34) in tRNA + diphosphate. It carries out the reaction 5-methylaminomethyl-S-(2E)-geranyl-thiouridine(34) in tRNA + selenophosphate + H(+) = 5-methylaminomethyl-2-(Se-phospho)selenouridine(34) in tRNA + (2E)-thiogeraniol. The catalysed reaction is 5-methylaminomethyl-2-(Se-phospho)selenouridine(34) in tRNA + H2O = 5-methylaminomethyl-2-selenouridine(34) in tRNA + phosphate. Functionally, involved in the post-transcriptional modification of the uridine at the wobble position (U34) of tRNA(Lys), tRNA(Glu) and tRNA(Gln). Catalyzes the conversion of 2-thiouridine (S2U-RNA) to 2-selenouridine (Se2U-RNA). Acts in a two-step process involving geranylation of 2-thiouridine (S2U) to S-geranyl-2-thiouridine (geS2U) and subsequent selenation of the latter derivative to 2-selenouridine (Se2U) in the tRNA chain. This Salmonella choleraesuis (strain SC-B67) protein is tRNA 2-selenouridine synthase.